We begin with the raw amino-acid sequence, 237 residues long: Putative HTH-type transcriptional regulator ycf28 (237 aa).

The region spanning 155–228 (KSITNRLISL…KKKVIIHDPI (74 aa)) is the HTH crp-type domain. Positions 188 to 207 (HKVLAQIIGSNRVSITRIIS) form a DNA-binding region, H-T-H motif.

It localises to the plastid. Its subcellular location is the chloroplast. The protein is Putative HTH-type transcriptional regulator ycf28 (ycf28) of Porphyra purpurea (Red seaweed).